The following is a 136-amino-acid chain: 1,4-dihydroxy-2-naphthoyl-CoA hydrolase (136 aa).

Glu-63 serves as the catalytic Nucleophile or proton acceptor. Residues Gly-82, 89-92 (HVRS), and 106-111 (HLGSRH) each bind substrate.

Belongs to the thioesterase PaaI family. In terms of assembly, homotetramer. Dimer of dimers.

The enzyme catalyses 1,4-dihydroxy-2-naphthoyl-CoA + H2O = 1,4-dihydroxy-2-naphthoate + CoA + H(+). It participates in quinol/quinone metabolism; 1,4-dihydroxy-2-naphthoate biosynthesis; 1,4-dihydroxy-2-naphthoate from chorismate: step 7/7. The protein operates within quinol/quinone metabolism; menaquinone biosynthesis. Its function is as follows. Catalyzes the hydrolysis of 1,4-dihydroxy-2-naphthoyl-CoA (DHNA-CoA) to 1,4-dihydroxy-2-naphthoate (DHNA). Also shows significant activity toward a wide range of acyl-CoA thioesters, and minimal activity toward benzoyl-holoEntB. This chain is 1,4-dihydroxy-2-naphthoyl-CoA hydrolase, found in Escherichia coli (strain K12).